We begin with the raw amino-acid sequence, 204 residues long: Large ribosomal subunit protein bL25 (204 aa).

At serine 123 the chain carries Phosphoserine.

The protein belongs to the bacterial ribosomal protein bL25 family. CTC subfamily. As to quaternary structure, part of the 50S ribosomal subunit; part of the 5S rRNA/L5/L18/L25 subcomplex. Contacts the 5S rRNA. Binds to the 5S rRNA independently of L5 and L18.

Functionally, this is one of the proteins that binds to the 5S RNA in the ribosome where it forms part of the central protuberance. The protein is Large ribosomal subunit protein bL25 of Pseudomonas aeruginosa (strain UCBPP-PA14).